Reading from the N-terminus, the 345-residue chain is N-acetyl-gamma-glutamyl-phosphate reductase (345 aa).

The active site involves Cys149.

Belongs to the NAGSA dehydrogenase family. Type 1 subfamily.

The protein resides in the cytoplasm. It carries out the reaction N-acetyl-L-glutamate 5-semialdehyde + phosphate + NADP(+) = N-acetyl-L-glutamyl 5-phosphate + NADPH + H(+). It participates in amino-acid biosynthesis; L-arginine biosynthesis; N(2)-acetyl-L-ornithine from L-glutamate: step 3/4. Functionally, catalyzes the NADPH-dependent reduction of N-acetyl-5-glutamyl phosphate to yield N-acetyl-L-glutamate 5-semialdehyde. The sequence is that of N-acetyl-gamma-glutamyl-phosphate reductase from Desulforapulum autotrophicum (strain ATCC 43914 / DSM 3382 / VKM B-1955 / HRM2) (Desulfobacterium autotrophicum).